Here is a 119-residue protein sequence, read N- to C-terminus: Vitelline membrane protein Vm34Ca (119 aa).

A signal peptide spans 1–19; sequence MKCIAIVSTICLLAAFVAA. Positions 69-106 constitute a VM domain; the sequence is SIPAPPCPKNYLFSCQPNLAPVPCSAPAPSYGSAGAYS.

This sequence belongs to the vitelline membrane protein family. In terms of tissue distribution, follicle cells.

The protein localises to the secreted. Functionally, major early eggshell protein. The chain is Vitelline membrane protein Vm34Ca (Vm34Ca) from Drosophila melanogaster (Fruit fly).